Here is a 65-residue protein sequence, read N- to C-terminus: Hainantoxin-X-3 (65 aa).

Positions 1–20 (MNMKILVLVAVLCLVVSTHA) are cleaved as a signal peptide. Residues 21–37 (ERHSKTDMEDSPMIQER) constitute a propeptide that is removed on maturation. Cystine bridges form between Cys-46-Cys-59 and Cys-55-Cys-64.

It belongs to the neurotoxin 36 family. 02 subfamily. In terms of tissue distribution, expressed by the venom gland.

It is found in the secreted. Reversibly blocks N-type calcium channels (Cav2.2/CACNA1B) in rat dorsal root ganglion cells. Elicits no toxic symptoms in either vertebrates or invertebrates during a period of 48 hours post-injection, when it was assayed in vivo by direct injection into mice and cockroaches. This is Hainantoxin-X-3 from Cyriopagopus hainanus (Chinese bird spider).